A 510-amino-acid chain; its full sequence is NAD(P) transhydrogenase subunit alpha (510 aa).

The Cytoplasmic portion of the chain corresponds to 1–401; it reads MRIGIPRERL…EEKCTCSPWR (401 aa). Residues 120 to 122, Val-175, 195 to 197, Glu-238, and Leu-257 contribute to the NAD(+) site; these read RIS and DTR. The next 2 membrane-spanning stretches (helical) occupy residues 402–422 and 423–443; these read KYAL…VAPK and EFLG…YVVW. Over 444–452 the chain is Cytoplasmic; sequence NVSHALHTP. The helical transmembrane segment at 453–473 threads the bilayer; that stretch reads LMSVTNAISGIIVVGALLQIG. The Periplasmic portion of the chain corresponds to 474–476; the sequence is QGG. Residues 477–497 form a helical membrane-spanning segment; it reads WVSFLSFIAVLIASINIFGGF. Residues 498–510 lie on the Cytoplasmic side of the membrane; sequence TVTQRMLKMFRKN.

It belongs to the AlaDH/PNT family. Heterodimer of an alpha (PntA) and a beta (PntB) chain. Alpha subunit serves as the dimerization unit.

It localises to the cell inner membrane. It catalyses the reaction NAD(+) + NADPH + H(+)(in) = NADH + NADP(+) + H(+)(out). Its function is as follows. The transhydrogenation between NADH and NADP is coupled to respiration and ATP hydrolysis and functions as a proton pump across the membrane. The chain is NAD(P) transhydrogenase subunit alpha (pntA) from Escherichia coli (strain K12).